Here is a 689-residue protein sequence, read N- to C-terminus: Putative ATP-dependent helicase IRC3 (689 aa).

The Helicase ATP-binding domain maps to 46–211 (NSIRQGTKRI…SMVMDKIVYH (166 aa)). Residue 59–66 (LATGGGKT) participates in ATP binding. Positions 158 to 161 (DEAH) match the DEAH box motif. The Helicase C-terminal domain maps to 265-438 (ILKTYLHKKQ…KIDERLRALF (174 aa)).

It belongs to the helicase family. IRC3 subfamily.

The protein resides in the mitochondrion. This chain is Putative ATP-dependent helicase IRC3 (IRC3), found in Saccharomyces cerevisiae (strain ATCC 204508 / S288c) (Baker's yeast).